The primary structure comprises 455 residues: Venom prothrombin activator notecarin-D1 (455 aa).

An N-terminal signal peptide occupies residues 1-20; that stretch reads MAPQLLLCLILTFLWSLPEA. Positions 21 to 40 are excised as a propeptide; sequence ESNVFLKSKVANRFLQRTKR. The Gla domain occupies 41–86; the sequence is SNSLFEEIRPGNIERECIEEKCSKEEAREVFEDNEKTETFWNVYVD. 4-carboxyglutamate is present on residues E46, E47, E54, E56, E59, E60, E65, E66, E69, E72, and E75. C57 and C62 form a disulfide bridge. Residues 86 to 122 form the EGF-like 1; calcium-binding domain; that stretch reads DGDQCSSNPCHYRGTCKDGIGSYTCTCLPNYEGKNCE. 11 disulfide bridges follow: C90-C101, C95-C110, C112-C121, C129-C140, C136-C149, C151-C164, C172-C328, C216-C221, C236-C252, C376-C390, and C401-C429. The O-linked (Hex...) serine glycan is linked to S92. The EGF-like 2 domain occupies 129 to 164; it reads CRVDNGNCWHFCKRVQSETQCSCAESYRLGVDGHSC. Residues 182 to 209 constitute a propeptide, activation peptide; it reads REASLPDFVQSQKATLLKKSDNPSPDIR. Positions 210-453 constitute a Peptidase S1 domain; it reads IVNGMDCKLG…FIPWIKKIMS (244 aa). The active-site Charge relay system is H251. N254 carries N-linked (GlcNAc...) asparagine glycosylation. D308 acts as the Charge relay system in catalysis. S405 (charge relay system) is an active-site residue.

This sequence belongs to the peptidase S1 family. Snake venom subfamily. Heterodimer of a light chain and a heavy chain; disulfide-linked. Post-translationally, gamma-carboxyglutamate residues are formed by vitamin K dependent carboxylation. These residues are essential for the binding of calcium. In terms of tissue distribution, expressed by the venom gland.

It localises to the secreted. It catalyses the reaction Selective cleavage of Arg-|-Thr and then Arg-|-Ile bonds in prothrombin to form thrombin.. Its function is as follows. Snake prothrombin activator that attacks the hemostatic system of prey. This protein is functionally similar to blood coagulation factor Xa. The polypeptide is Venom prothrombin activator notecarin-D1 (Notechis scutatus scutatus (Mainland tiger snake)).